The primary structure comprises 426 residues: 3-phosphoshikimate 1-carboxyvinyltransferase (426 aa).

3 residues coordinate 3-phosphoshikimate: K22, S23, and R27. K22 lines the phosphoenolpyruvate pocket. 2 residues coordinate phosphoenolpyruvate: G96 and R124. 7 residues coordinate 3-phosphoshikimate: S170, S171, Q172, S198, D314, N337, and K341. Phosphoenolpyruvate is bound at residue Q172. D314 functions as the Proton acceptor in the catalytic mechanism. Phosphoenolpyruvate is bound by residues R345, R387, and K412.

Belongs to the EPSP synthase family. As to quaternary structure, monomer.

It localises to the cytoplasm. It carries out the reaction 3-phosphoshikimate + phosphoenolpyruvate = 5-O-(1-carboxyvinyl)-3-phosphoshikimate + phosphate. It functions in the pathway metabolic intermediate biosynthesis; chorismate biosynthesis; chorismate from D-erythrose 4-phosphate and phosphoenolpyruvate: step 6/7. Catalyzes the transfer of the enolpyruvyl moiety of phosphoenolpyruvate (PEP) to the 5-hydroxyl of shikimate-3-phosphate (S3P) to produce enolpyruvyl shikimate-3-phosphate and inorganic phosphate. In Shewanella pealeana (strain ATCC 700345 / ANG-SQ1), this protein is 3-phosphoshikimate 1-carboxyvinyltransferase.